A 243-amino-acid chain; its full sequence is Pyridoxine 5'-phosphate synthase (243 aa).

Residue N9 participates in 3-amino-2-oxopropyl phosphate binding. A 1-deoxy-D-xylulose 5-phosphate-binding site is contributed by 11–12 (DH). R20 is a binding site for 3-amino-2-oxopropyl phosphate. H45 serves as the catalytic Proton acceptor. 1-deoxy-D-xylulose 5-phosphate-binding residues include R47 and H52. Residue E72 is the Proton acceptor of the active site. Residue T102 coordinates 1-deoxy-D-xylulose 5-phosphate. H193 (proton donor) is an active-site residue. Residues G194 and 215–216 (GH) each bind 3-amino-2-oxopropyl phosphate.

Belongs to the PNP synthase family. As to quaternary structure, homooctamer; tetramer of dimers.

The protein localises to the cytoplasm. The catalysed reaction is 3-amino-2-oxopropyl phosphate + 1-deoxy-D-xylulose 5-phosphate = pyridoxine 5'-phosphate + phosphate + 2 H2O + H(+). Its pathway is cofactor biosynthesis; pyridoxine 5'-phosphate biosynthesis; pyridoxine 5'-phosphate from D-erythrose 4-phosphate: step 5/5. Functionally, catalyzes the complicated ring closure reaction between the two acyclic compounds 1-deoxy-D-xylulose-5-phosphate (DXP) and 3-amino-2-oxopropyl phosphate (1-amino-acetone-3-phosphate or AAP) to form pyridoxine 5'-phosphate (PNP) and inorganic phosphate. In Salmonella paratyphi A (strain ATCC 9150 / SARB42), this protein is Pyridoxine 5'-phosphate synthase.